A 973-amino-acid polypeptide reads, in one-letter code: Peptidyl-glycine alpha-amidating monooxygenase (973 aa).

The signal sequence occupies residues 1–20 (MAGRVPSLLVLLVFPSSCLA). A peptidylglycine alpha-hydroxylating monooxygenase region spans residues 1 to 494 (MAGRVPSLLV…EGTWEPEHTG (494 aa)). Residues 21–30 (FRSPLSVFKR) constitute a propeptide that is removed on maturation. The Intragranular segment spans residues 31–863 (FKETTRPFSN…QKLIKEPGSG (833 aa)). 5 disulfide bridges follow: cysteine 42–cysteine 181, cysteine 76–cysteine 121, cysteine 109–cysteine 126, cysteine 222–cysteine 329, and cysteine 288–cysteine 310. Cu(2+)-binding residues include histidine 102 and histidine 103. Cu(2+) contacts are provided by histidine 167, histidine 237, histidine 239, and methionine 309. Positions 495-817 (DFHMEEALDW…LTEKLEHRSV (323 aa)) are peptidyl-alpha-hydroxyglycine alpha-amidating lyase. 4 NHL repeats span residues 498–541 (MEEA…NSFD), 567–608 (AAVL…LDPN), 617–662 (LGRS…FSPS), and 670–714 (GEES…FKTD). Valine 517 contributes to the Ca(2+) binding site. An a protein-binding site is contributed by arginine 530. Histidine 582 contacts Zn(2+). A Ca(2+)-binding site is contributed by leucine 584. An intrachain disulfide couples cysteine 631 to cysteine 652. Tyrosine 651 contributes to the a protein binding site. Residue histidine 687 participates in Zn(2+) binding. Cysteine 699 and cysteine 710 form a disulfide bridge. Arginine 703 serves as a coordination point for a protein. The N-linked (GlcNAc...) asparagine glycan is linked to asparagine 762. One copy of the NHL 5 repeat lies at 766-809 (GEIIDIFKPVRKHFDMPHDIVASEDGTVYIGDAHTNTVWKFTLT). Histidine 783 is a Zn(2+) binding site. Aspartate 784 contacts Ca(2+). The chain crosses the membrane as a helical span at residues 864–887 (VPVVLITTLLVIPVVVLLAIAIFI). Isoleucine 875 and arginine 893 each carry sulfotyrosine. Residues 888–973 (RWKKSRAFGD…PLPALAPSSS (86 aa)) are Cytoplasmic-facing. Residues serine 918, serine 929, and serine 942 each carry the phosphoserine modification. Residues 925–942 (NFFASRKGYSRKGFDRLS) are interaction with RASSF9. The interval 937-973 (GFDRLSTEGSDQEKEDDGSESEEEYSAPLPALAPSSS) is disordered. A Phosphothreonine modification is found at threonine 943. Serine 946 bears the Phosphoserine; by UHMK1; in vitro mark. Residues 949–961 (EKEDDGSESEEEY) show a composition bias toward acidic residues. At serine 957 the chain carries Phosphoserine. A compositionally biased stretch (low complexity) spans 962-973 (SAPLPALAPSSS).

It in the C-terminal section; belongs to the peptidyl-alpha-hydroxyglycine alpha-amidating lyase family. This sequence in the N-terminal section; belongs to the copper type II ascorbate-dependent monooxygenase family. As to quaternary structure, monomer. Interacts with RASSF9. It depends on Zn(2+) as a cofactor. Requires Cu(2+) as cofactor.

It is found in the cytoplasmic vesicle. It localises to the secretory vesicle membrane. The protein resides in the membrane. The protein localises to the secreted. The catalysed reaction is a [peptide]-C-terminal glycine + 2 L-ascorbate + O2 = a [peptide]-C-terminal (2S)-2-hydroxyglycine + 2 monodehydro-L-ascorbate radical + H2O. It carries out the reaction a [peptide]-C-terminal (2S)-2-hydroxyglycine = a [peptide]-C-terminal amide + glyoxylate. It catalyses the reaction N-dodecanoylglycine + 2 L-ascorbate + O2 = N-dodecanoyl-(2S)-hydroxyglycine + 2 monodehydro-L-ascorbate radical + H2O. The enzyme catalyses N-dodecanoyl-(2S)-hydroxyglycine = dodecanamide + glyoxylate. The catalysed reaction is N-(9Z,12Z,15Z)-octadecatrienoylglycine + 2 L-ascorbate + O2 = N-(9Z,12Z,15Z)-octadecatrienoyl-(2S)-hydroxyglycine + 2 monodehydro-L-ascorbate radical + H2O. It carries out the reaction N-(9Z,12Z,15Z)-octadecatrienoyl-(2S)-hydroxyglycine = (9Z,12Z,15Z)-octadecatrienamide + glyoxylate. It catalyses the reaction N-(9Z-octadecenoyl)glycine + 2 L-ascorbate + O2 = N-(9Z-octadecenoyl)-(2S)-hydroxyglycine + 2 monodehydro-L-ascorbate radical + H2O. The enzyme catalyses N-(9Z-octadecenoyl)-(2S)-hydroxyglycine = (9Z)-octadecenamide + glyoxylate. The catalysed reaction is N-tetradecanoylglycine + 2 L-ascorbate + O2 = N-tetradecanoyl-(2S)-hydroxyglycine + 2 monodehydro-L-ascorbate radical + H2O. It carries out the reaction N-tetradecanoyl-(2S)-hydroxyglycine = tetradecamide + glyoxylate. It catalyses the reaction N-decanoylglycine + 2 L-ascorbate + O2 = N-decanoyl-(2S)-hydroxyglycine + 2 monodehydro-L-ascorbate radical + H2O. The enzyme catalyses N-decanoyl-(2S)-hydroxyglycine = decanamide + glyoxylate. The catalysed reaction is N-octanoylglycine + 2 L-ascorbate + O2 = N-octanoyl-(2S)-hydroxyglycine + 2 monodehydro-L-ascorbate radical + H2O. It carries out the reaction N-octanoyl-(2S)-hydroxyglycine = octanamide + glyoxylate. With respect to regulation, PAM activity is inhibited by EDTA, phenylglyoxal and diethyl pyrocarbonate. PAL activity is stimulated by cadmium and inhibited by mercury. Functionally, bifunctional enzyme that catalyzes amidation of the C-terminus of proteins. Alpha-amidation is present at the C-terminus of many endocrine hormones and neuropeptides and is required for their activity. C-terminal amidation also takes place in response to protein fragmentation triggered by oxidative stress, promoting degradation of amidated protein fragments by the proteasome. Alpha-amidation involves two sequential reactions, both of which are catalyzed by separate catalytic domains of the enzyme. The first step, catalyzed by peptidyl alpha-hydroxylating monooxygenase (PHM) domain, is the copper-, ascorbate-, and O2- dependent stereospecific hydroxylation (with S stereochemistry) at the alpha-carbon (C-alpha) of the C-terminal glycine of the peptidylglycine substrate. The second step, catalyzed by the peptidylglycine amidoglycolate lyase (PAL) domain, is the zinc-dependent cleavage of the N-C-alpha bond, producing the alpha-amidated peptide and glyoxylate. Similarly, catalyzes the two-step conversion of an N-fatty acylglycine to a primary fatty acid amide and glyoxylate. The protein is Peptidyl-glycine alpha-amidating monooxygenase of Homo sapiens (Human).